Consider the following 280-residue polypeptide: UDP-3-O-acyl-N-acetylglucosamine deacetylase (280 aa).

The Zn(2+) site is built by His-77, His-238, and Asp-242. The Proton donor role is filled by His-265.

This sequence belongs to the LpxC family. Requires Zn(2+) as cofactor.

It catalyses the reaction a UDP-3-O-[(3R)-3-hydroxyacyl]-N-acetyl-alpha-D-glucosamine + H2O = a UDP-3-O-[(3R)-3-hydroxyacyl]-alpha-D-glucosamine + acetate. The protein operates within glycolipid biosynthesis; lipid IV(A) biosynthesis; lipid IV(A) from (3R)-3-hydroxytetradecanoyl-[acyl-carrier-protein] and UDP-N-acetyl-alpha-D-glucosamine: step 2/6. Functionally, catalyzes the hydrolysis of UDP-3-O-myristoyl-N-acetylglucosamine to form UDP-3-O-myristoylglucosamine and acetate, the committed step in lipid A biosynthesis. In Trichormus variabilis (strain ATCC 29413 / PCC 7937) (Anabaena variabilis), this protein is UDP-3-O-acyl-N-acetylglucosamine deacetylase.